Reading from the N-terminus, the 223-residue chain is Probable transaldolase (223 aa).

The active-site Schiff-base intermediate with substrate is the lysine 86.

It belongs to the transaldolase family. Type 3B subfamily.

It localises to the cytoplasm. The enzyme catalyses D-sedoheptulose 7-phosphate + D-glyceraldehyde 3-phosphate = D-erythrose 4-phosphate + beta-D-fructose 6-phosphate. Its pathway is carbohydrate degradation; pentose phosphate pathway; D-glyceraldehyde 3-phosphate and beta-D-fructose 6-phosphate from D-ribose 5-phosphate and D-xylulose 5-phosphate (non-oxidative stage): step 2/3. In terms of biological role, transaldolase is important for the balance of metabolites in the pentose-phosphate pathway. The protein is Probable transaldolase (tal) of Thermoplasma volcanium (strain ATCC 51530 / DSM 4299 / JCM 9571 / NBRC 15438 / GSS1).